We begin with the raw amino-acid sequence, 155 residues long: D-aminoacyl-tRNA deacylase (155 aa).

The Gly-cisPro motif, important for rejection of L-amino acids signature appears at 137 to 138 (GP).

The protein belongs to the DTD family. Homodimer.

It is found in the cytoplasm. It catalyses the reaction glycyl-tRNA(Ala) + H2O = tRNA(Ala) + glycine + H(+). The enzyme catalyses a D-aminoacyl-tRNA + H2O = a tRNA + a D-alpha-amino acid + H(+). In terms of biological role, an aminoacyl-tRNA editing enzyme that deacylates mischarged D-aminoacyl-tRNAs. Also deacylates mischarged glycyl-tRNA(Ala), protecting cells against glycine mischarging by AlaRS. Acts via tRNA-based rather than protein-based catalysis; rejects L-amino acids rather than detecting D-amino acids in the active site. By recycling D-aminoacyl-tRNA to D-amino acids and free tRNA molecules, this enzyme counteracts the toxicity associated with the formation of D-aminoacyl-tRNA entities in vivo and helps enforce protein L-homochirality. This Nitrosococcus oceani (strain ATCC 19707 / BCRC 17464 / JCM 30415 / NCIMB 11848 / C-107) protein is D-aminoacyl-tRNA deacylase.